Consider the following 653-residue polypeptide: Splicing factor 1 (653 aa).

2 disordered regions span residues 1–44 (MATG…PPGL) and 65–94 (LRTG…GKRL). Alanine 2 is subject to N-acetylalanine. Serine 14 bears the Phosphoserine mark. The short motif at 15-19 (KKRKR) is the Nuclear localization signal element. A Phosphoserine; by PKG modification is found at serine 20. A phosphoserine mark is found at serine 80 and serine 82. Tyrosine 87 is modified (phosphotyrosine). Serine 89 is modified (phosphoserine). Residues 141–222 (MIPQDEYPEI…ENVKKAVEQI (82 aa)) enclose the KH domain. The segment at 277-296 (TVCTKCGGAGHIASDCKFQR) adopts a CCHC-type zinc-finger fold. 2 disordered regions span residues 325–584 (VPAS…APPP) and 611–653 (RIPP…GKAA). Positions 335-350 (PATTPLASAPRPAAPA) are enriched in low complexity. Residues 382 to 394 (MHGGGPGGPGGGP) are compositionally biased toward gly residues. Pro residues-rich tracts occupy residues 418-447 (NGPP…PPPM) and 470-499 (MPPP…PLPP). A compositionally biased stretch (low complexity) spans 515–534 (SSMASSTPLPWQQNTTTTTT). A compositionally biased stretch (pro residues) spans 567–584 (VPLPPGVQPPLPPGAPPP).

The protein belongs to the BBP/SF1 family. As to quaternary structure, binds U2AF2. Interacts with U1 snRNA. Interacts with RBM17. Binds EWSR1, FUS and TAF15. Post-translationally, phosphorylation on Ser-20 interferes with U2AF2 binding and spliceosome assembly. As to expression, detected at intermediate levels in spleen. Lower levels in heart, kidney, brain, liver, testis, bone marrow, adrenal gland, lymph nodes, pancreas and thymus.

The protein localises to the nucleus. Necessary for the ATP-dependent first step of spliceosome assembly. Binds to the intron branch point sequence (BPS) 5'-UACUAAC-3' of the pre-mRNA. May act as transcription repressor. This Mus musculus (Mouse) protein is Splicing factor 1 (Sf1).